Consider the following 343-residue polypeptide: Methylthioribose-1-phosphate isomerase (343 aa).

Substrate contacts are provided by residues 48 to 50, R88, and Q193; that span reads RGA. Catalysis depends on D234, which acts as the Proton donor. 244-245 contacts substrate; sequence NK.

It belongs to the eIF-2B alpha/beta/delta subunits family. MtnA subfamily.

It carries out the reaction 5-(methylsulfanyl)-alpha-D-ribose 1-phosphate = 5-(methylsulfanyl)-D-ribulose 1-phosphate. It participates in amino-acid biosynthesis; L-methionine biosynthesis via salvage pathway; L-methionine from S-methyl-5-thio-alpha-D-ribose 1-phosphate: step 1/6. Functionally, catalyzes the interconversion of methylthioribose-1-phosphate (MTR-1-P) into methylthioribulose-1-phosphate (MTRu-1-P). In Thermotoga petrophila (strain ATCC BAA-488 / DSM 13995 / JCM 10881 / RKU-1), this protein is Methylthioribose-1-phosphate isomerase.